We begin with the raw amino-acid sequence, 1575 residues long: Mediator of RNA polymerase II transcription subunit 1 (1575 aa).

The interval M1–N670 is interaction with the Mediator complex and THRA. The tract at residues M16–G590 is interaction with ESR1. Interaction with the Mediator complex regions lie at residues F108–T212 and S215–G390. The tract at residues P405–M644 is interaction with THRA. Positions P542 to E789 are interaction with VDR. Position 588 is a phosphoserine (S588). The short motif at L604 to L608 is the LXXLL motif 1 element. Disordered stretches follow at residues Q609–D706, H737–Q760, S791–S818, S874–F895, and S951–D1564. A compositionally biased stretch (pro residues) spans P622–V632. Residues P622–K701 form an interaction with GATA1 region. The interaction with PPARGC1A and THRA stretch occupies residues P622–K701. The short motif at L645–L649 is the LXXLL motif 2 element. The span at Q655–S675 shows a compositional bias: polar residues. Residues D656–Q1066 are interaction with ESR1. At S664 the chain carries Phosphoserine. Residues P696–D706 are compositionally biased toward basic and acidic residues. S795 carries the phosphoserine modification. T805 bears the Phosphothreonine mark. The segment covering R808 to S818 has biased composition (polar residues). Positions Q875 to A902 match the Integrase domain-binding motif (IBM) motif. S887, S953, and S955 each carry phosphoserine. The span at L963–E974 shows a compositional bias: basic and acidic residues. A compositionally biased stretch (gly residues) spans N976–P986. At T1032 the chain carries Phosphothreonine; by MAPK1 or MAPK3. Low complexity predominate over residues P1034–T1051. Phosphothreonine occurs at positions 1051 and 1057. Low complexity-rich tracts occupy residues S1078–S1094 and S1101–G1152. Residue S1158 is modified to Phosphoserine. Polar residues predominate over residues S1158 to M1184. Residue K1179 is modified to N6-acetyllysine. Over residues N1185 to H1197 the composition is skewed to low complexity. S1209 is modified (phosphoserine). At T1217 the chain carries Phosphothreonine. 2 stretches are compositionally biased toward low complexity: residues S1220 to S1258 and S1265 to K1295. S1225 is modified (phosphoserine). The interaction with TP53 stretch occupies residues S1251 to L1423. Phosphoserine is present on residues S1304 and S1349. The segment covering M1331–E1352 has biased composition (polar residues). Over residues Q1354–K1366 the composition is skewed to basic and acidic residues. 2 positions are modified to phosphoserine: S1405 and S1435. Polar residues-rich tracts occupy residues I1427 to T1442 and P1450 to S1484. T1442 is modified (phosphothreonine). T1459 carries the phosphothreonine; by MAPK1 or MAPK3 modification. Phosphoserine occurs at positions 1465, 1467, 1481, 1483, and 1484. Basic residues predominate over residues K1498 to K1507. The residue at position 1523 (K1523) is an N6-acetyllysine. Positions W1527–I1545 are enriched in polar residues.

This sequence belongs to the Mediator complex subunit 1 family. In terms of assembly, component of the Mediator complex, which is composed of MED1, MED4, MED6, MED7, MED8, MED9, MED10, MED11, MED12, MED13, MED13L, MED14, MED15, MED16, MED17, MED18, MED19, MED20, MED21, MED22, MED23, MED24, MED25, MED26, MED27, MED29, MED30, MED31, CCNC, CDK8 and CDC2L6/CDK11. The MED12, MED13, CCNC and CDK8 subunits form a distinct module termed the CDK8 module. Mediator containing the CDK8 module is less active than Mediator lacking this module in supporting transcriptional activation. Individual preparations of the Mediator complex lacking one or more distinct subunits have been variously termed ARC, CRSP, DRIP, PC2, SMCC and TRAP. This subunit specifically interacts with a number of nuclear receptors in a ligand-dependent fashion including AR, ESR1, ESR2, PPARA, PPARG, RORA, RXRA, RXRG, THRA, THRB and VDR. Interacts with CTNNB1, GABPA, GLI3, PPARGC1A and TP53. Interacts with GATA1 and YWHAH. Interacts with CLOCK; this interaction requires the presence of THRAP3. Interacts with CCAR1. Interacts with NR4A3. Interacts (via IBM motif) with PSIP1 (via IBD domain); phosphorylation increases its affinity for PSIP1. Interacts with USP22. Phosphorylated by MAPK1 or MAPK3 during G2/M phase which may enhance protein stability and promote entry into the nucleolus. Phosphorylation increases its interaction with PSIP1. In terms of tissue distribution, widely expressed in the adult, with high levels of expression in the liver, lung, intestinal mucosa, kidney cortex, thymic cortex, splenic follicle and seminiferous epithelium in testis. Also expressed in the adult heart, brain, spleen and skeletal muscle.

Its subcellular location is the nucleus. Component of the Mediator complex, a coactivator involved in the regulated transcription of nearly all RNA polymerase II-dependent genes. Mediator functions as a bridge to convey information from gene-specific regulatory proteins to the basal RNA polymerase II transcription machinery. Mediator is recruited to promoters by direct interactions with regulatory proteins and serves as a scaffold for the assembly of a functional preinitiation complex with RNA polymerase II and the general transcription factors. Essential for embryogenesis, including development of the central nervous system, heart, liver and placenta and for erythropoiesis. Also required for normal transcriptional control of thyroid-stimulating hormone beta (TSHB) in the pituitary. Acts as a coactivator for GATA1-mediated transcriptional activation during erythroid differentiation of K562 erythroleukemia cells. The protein is Mediator of RNA polymerase II transcription subunit 1 (Med1) of Mus musculus (Mouse).